Here is a 255-residue protein sequence, read N- to C-terminus: uncharacterized protein (255 aa).

The HTH deoR-type domain occupies 4–59 (RNERLNLIRKRVDQYGQVAVKDLAIFLQVTPETVRKDLETLENDKLITRTHGGAIQ). Residues 21-40 (VAVKDLAIFLQVTPETVRKD) constitute a DNA-binding region (H-T-H motif).

This is an uncharacterized protein from Staphylococcus epidermidis (strain ATCC 12228 / FDA PCI 1200).